Consider the following 53-residue polypeptide: Unknown protein from 2D-PAGE of needles (53 aa).

This chain is Unknown protein from 2D-PAGE of needles, found in Pinus pinaster (Maritime pine).